The sequence spans 416 residues: Serine hydroxymethyltransferase (416 aa).

Residues Leu-121 and 125–127 (GHL) each bind (6S)-5,6,7,8-tetrahydrofolate. Lys-229 is subject to N6-(pyridoxal phosphate)lysine.

The protein belongs to the SHMT family. Homodimer. Pyridoxal 5'-phosphate is required as a cofactor.

The protein resides in the cytoplasm. The catalysed reaction is (6R)-5,10-methylene-5,6,7,8-tetrahydrofolate + glycine + H2O = (6S)-5,6,7,8-tetrahydrofolate + L-serine. It functions in the pathway one-carbon metabolism; tetrahydrofolate interconversion. It participates in amino-acid biosynthesis; glycine biosynthesis; glycine from L-serine: step 1/1. Functionally, catalyzes the reversible interconversion of serine and glycine with tetrahydrofolate (THF) serving as the one-carbon carrier. This reaction serves as the major source of one-carbon groups required for the biosynthesis of purines, thymidylate, methionine, and other important biomolecules. Also exhibits THF-independent aldolase activity toward beta-hydroxyamino acids, producing glycine and aldehydes, via a retro-aldol mechanism. The polypeptide is Serine hydroxymethyltransferase (Aromatoleum aromaticum (strain DSM 19018 / LMG 30748 / EbN1) (Azoarcus sp. (strain EbN1))).